Here is a 792-residue protein sequence, read N- to C-terminus: Xaa-Pro dipeptidyl-peptidase (792 aa).

Catalysis depends on charge relay system residues Ser363, Asp482, and His513.

The protein belongs to the peptidase S15 family. As to quaternary structure, homodimer.

The protein localises to the cytoplasm. It catalyses the reaction Hydrolyzes Xaa-Pro-|- bonds to release unblocked, N-terminal dipeptides from substrates including Ala-Pro-|-p-nitroanilide and (sequentially) Tyr-Pro-|-Phe-Pro-|-Gly-Pro-|-Ile.. In terms of biological role, removes N-terminal dipeptides sequentially from polypeptides having unsubstituted N-termini provided that the penultimate residue is proline. The protein is Xaa-Pro dipeptidyl-peptidase (pepX) of Lactobacillus delbrueckii subsp. lactis.